Here is a 298-residue protein sequence, read N- to C-terminus: MLYQQISQNKQRTVVLLVVFFALLALIGASAGYLLLDNYAMGLVLALVIGVIYATSMIFQSTSLVMSMNNAREVTEKEAPGFFHIVEDMAMVAQIPMPRVFIIEDPSLNAFATGSSPQNAAVAATTGLLEVMNREELEGVIGHEISHIRNYDIRISTIAVALASAVTVISSIGGRMLWYGGGSRRQRDDGDDDVLRIITLLLSLLSLLLAPLVASLIQLAISRQREYLADASSVELTRNPQGMINALEKLQLSQPMKHPVDDASAALYINEPRKKRSFSSLFSTHPPIEERIERLKNM.

2 helical membrane passes run 14 to 34 and 39 to 59; these read VVLL…AGYL and YAMG…SMIF. Residue His143 participates in Zn(2+) binding. Glu144 is an active-site residue. Zn(2+) is bound at residue His147. The next 2 helical transmembrane spans lie at 158–178 and 197–217; these read IAVA…RMLW and IITL…ASLI. Position 226 (Glu226) interacts with Zn(2+).

It belongs to the peptidase M48B family. Zn(2+) serves as cofactor.

The protein localises to the cell membrane. The chain is Protease HtpX homolog from Streptococcus pyogenes serotype M28 (strain MGAS6180).